The following is a 498-amino-acid chain: Aspartyl aminopeptidase (498 aa).

A Zn(2+)-binding site is contributed by H91. Substrate is bound at residue H166. Residue D274 coordinates Zn(2+). E311 serves as a coordination point for substrate. Zn(2+) contacts are provided by E312 and D363. D363, H366, K391, and Y398 together coordinate substrate. Residue H463 participates in Zn(2+) binding.

This sequence belongs to the peptidase M18 family. Tetrahedron-shaped homododecamer built from six homodimers. The cofactor is Zn(2+). Post-translationally, the N-terminus is blocked.

It catalyses the reaction Release of an N-terminal aspartate or glutamate from a peptide, with a preference for aspartate.. Its activity is regulated as follows. Inhibited by zinc. Stimulated by calcium and bacitracin. The polypeptide is Aspartyl aminopeptidase (dapA) (Aspergillus oryzae (strain ATCC 42149 / RIB 40) (Yellow koji mold)).